The sequence spans 953 residues: Zinc finger protein 507 (953 aa).

Ser95 carries the post-translational modification Phosphoserine. C2H2-type zinc fingers lie at residues 125–147 (YQCSLCKFLSSSFSVLKDHIKQH), 155–185 (LMCSECHITSRSQEELEAHVVNDHDNDANIH), and 248–270 (YRCLFCSYTCGQQRMLKTHAWKH). At Ser427 the chain carries Phosphoserine. A disordered region spans residues 470 to 489 (KGLATDENAPPGRRRTNSES). 5 C2H2-type zinc fingers span residues 641 to 663 (YRCRLCHYTSGNKGYIKQHLRVH), 669 to 691 (YQCPICEHIADNSKDLESHMIHH), 697 to 720 (YQCKQCEESFHYKSQLRNHEREQH), 758 to 780 (YRCDVCDYTSTTYVGVRNHRRIH), and 786 to 808 (YRCSLCGYVCSHPPSLKSHMWKH). Residues 831-891 (GRVLGKTPGK…KLSPTSNTSY (61 aa)) are disordered. The segment covering 854–891 (TGSSENAVSSSELMSQTPSEVLGTNENEKLSPTSNTSY) has biased composition (polar residues). A C2H2-type 9 zinc finger spans residues 911-933 (FCCCICGFESTSKENLLDHMKEH).

The protein belongs to the krueppel C2H2-type zinc-finger protein family.

The protein resides in the nucleus. Its function is as follows. May be involved in transcriptional regulation. In Pongo abelii (Sumatran orangutan), this protein is Zinc finger protein 507 (ZNF507).